Consider the following 332-residue polypeptide: Ribosomal RNA small subunit methyltransferase H (332 aa).

Residues 36–38 (GGY), Asp54, Phe81, Asp102, and Gln109 each bind S-adenosyl-L-methionine.

The protein belongs to the methyltransferase superfamily. RsmH family.

It localises to the cytoplasm. It carries out the reaction cytidine(1402) in 16S rRNA + S-adenosyl-L-methionine = N(4)-methylcytidine(1402) in 16S rRNA + S-adenosyl-L-homocysteine + H(+). Functionally, specifically methylates the N4 position of cytidine in position 1402 (C1402) of 16S rRNA. The polypeptide is Ribosomal RNA small subunit methyltransferase H (Nitrobacter winogradskyi (strain ATCC 25391 / DSM 10237 / CIP 104748 / NCIMB 11846 / Nb-255)).